Consider the following 1225-residue polypeptide: Cohesin subunit SA-3 (1225 aa).

The segment at 1 to 97 (MSSPLQRAVG…HSRKQSEPPA (97 aa)) is disordered. Over residues 15-26 (ALSASSSSSASL) the composition is skewed to low complexity. Positions 45 to 54 (LADEDTDFED) are enriched in acidic residues. Basic residues-rich tracts occupy residues 59–69 (NVKKRAAKRPP) and 76–90 (KHPKKGSRVVHRHSR). An SCD domain is found at 309 to 394 (FVHRYRDVLP…SRFKDRMVSM (86 aa)). 3 disordered regions span residues 546–567 (SEGHPPVGRVTGRKGLTSKERK), 1063–1113 (AETS…STAV), and 1177–1225 (EEDE…IEDF). Basic and acidic residues predominate over residues 1078-1089 (VEGPAKPNREDV). Residues 1090–1099 (SSSQEESLQL) show a composition bias toward low complexity. Residues 1177 to 1191 (EEDEEEELEIQDESN) show a composition bias toward acidic residues. Residues 1198–1209 (DMQASSYSSTSE) are compositionally biased toward polar residues. S1203 bears the Phosphoserine mark. Residues 1216–1225 (DSTELDIEDF) are compositionally biased toward acidic residues.

The protein belongs to the SCC3 family. In terms of assembly, component of the meiosis-specific cohesin complex, which also contains the SMC1 (SMC1A or SMC1B) and SMC3 heterodimer. Such complex likely contains RAD21, or the meiosis-specific related protein REC8. Interacts with CCDC79/TERB1; recruiting cohesin to telomeres to develop structural rigidity. Post-translationally, phosphorylated. Testis specific.

The protein resides in the nucleus. The protein localises to the chromosome. Its subcellular location is the centromere. Functionally, meiosis specific component of cohesin complex. The cohesin complex is required for the cohesion of sister chromatids after DNA replication. The cohesin complex apparently forms a large proteinaceous ring within which sister chromatids can be trapped. At anaphase, the complex is cleaved and dissociates from chromatin, allowing sister chromatids to segregate. The meiosis-specific cohesin complex probably replaces mitosis specific cohesin complex when it dissociates from chromatin during prophase I. The polypeptide is Cohesin subunit SA-3 (STAG3) (Homo sapiens (Human)).